The sequence spans 330 residues: MASWVGTELSALNPLRTLWLALAAAFLLALLLQLAPAGLLPNCALFQDLIRYGKTKLSGPRRPAVCRAFDVPKRYFSHFYVVSVLWNGFLLWFLSRSLFLGAPFPNWLRALLRTLGSTQFRALEMESKASQMLVGELALSAFLVLVFLWVHSVRRLFECFYISVFSNAVMHVVQYCFGLVYYVLVGLTVLSQVPMDDKNVYMLGKNLLLPARWFHVLGMMMFLWSSAHQYECHVILSNLRRNKKGAIVHCQHRIPFGDWFEYVSSANYLAELMIYISMAVTFGFHNFTWWLVVAYVFFCQALSAFFNHKFYKSTFVSYPKHRKAFLPFLF.

The Cytoplasmic segment spans residues 1-19; sequence MASWVGTELSALNPLRTLW. A helical membrane pass occupies residues 20–40; that stretch reads LALAAAFLLALLLQLAPAGLL. Residues 41–74 are Lumenal-facing; that stretch reads PNCALFQDLIRYGKTKLSGPRRPAVCRAFDVPKR. The helical transmembrane segment at 75–95 threads the bilayer; the sequence is YFSHFYVVSVLWNGFLLWFLS. Residues 96 to 132 are Cytoplasmic-facing; sequence RSLFLGAPFPNWLRALLRTLGSTQFRALEMESKASQM. Residues 133–153 traverse the membrane as a helical segment; that stretch reads LVGELALSAFLVLVFLWVHSV. The Lumenal portion of the chain corresponds to 154 to 168; the sequence is RRLFECFYISVFSNA. The chain crosses the membrane as a helical span at residues 169–189; that stretch reads VMHVVQYCFGLVYYVLVGLTV. At 190 to 206 the chain is on the cytoplasmic side; it reads LSQVPMDDKNVYMLGKN. Residues 207 to 227 form a helical membrane-spanning segment; the sequence is LLLPARWFHVLGMMMFLWSSA. Residues 228 to 277 are Lumenal-facing; that stretch reads HQYECHVILSNLRRNKKGAIVHCQHRIPFGDWFEYVSSANYLAELMIYIS. A helical membrane pass occupies residues 278–298; the sequence is MAVTFGFHNFTWWLVVAYVFF. Over 299-330 the chain is Cytoplasmic; it reads CQALSAFFNHKFYKSTFVSYPKHRKAFLPFLF.

The protein belongs to the steroid 5-alpha reductase family. Polyprenal reductase subfamily.

The protein resides in the endoplasmic reticulum membrane. It catalyses the reaction a di-trans,poly-cis-dolichal + NADP(+) = a di-trans,poly-cis-polyprenal + NADPH + H(+). The catalysed reaction is a 3-oxo-5alpha-steroid + NADP(+) = a 3-oxo-Delta(4)-steroid + NADPH + H(+). It carries out the reaction androst-4-ene-3,17-dione + NADPH + H(+) = 5alpha-androstan-3,17-dione + NADP(+). The enzyme catalyses 17beta-hydroxy-5alpha-androstan-3-one + NADP(+) = testosterone + NADPH + H(+). It functions in the pathway protein modification; protein glycosylation. Its function is as follows. Plays a key role in early steps of protein N-linked glycosylation by being involved in the conversion of polyprenol into dolichol. Acts as a polyprenal reductase that mediates the reduction of polyprenal into dolichal in a NADP-dependent mechanism. Dolichols are required for the synthesis of dolichol-linked monosaccharides and the oligosaccharide precursor used for N-glycosylation. Also able to convert testosterone (T) into 5-alpha-dihydrotestosterone (DHT). This is Polyprenal reductase from Mesocricetus auratus (Golden hamster).